The sequence spans 108 residues: Virulence-associated protein I (108 aa).

The region spanning 19–74 (LREEYLKPMGLSAHALAKALHVSPSRINEIVREQRGITADTALRLVRYFGGDAQSW) is the HTH cro/C1-type domain. Residues 30-49 (SAHALAKALHVSPSRINEIV) constitute a DNA-binding region (H-T-H motif).

This sequence belongs to the VapA/VapI family.

The chain is Virulence-associated protein I (vapI) from Dichelobacter nodosus (Bacteroides nodosus).